Reading from the N-terminus, the 104-residue chain is uncharacterized protein (104 aa).

The next 2 membrane-spanning stretches (helical) occupy residues 45–65 (LYGIFSCFLLFYSLKDLIGVF) and 70–90 (LYLSILLLWLLVLLFCLAKGL).

The protein resides in the membrane. This is an uncharacterized protein from Saccharomyces cerevisiae (strain ATCC 204508 / S288c) (Baker's yeast).